The following is a 297-amino-acid chain: 4-hydroxy-tetrahydrodipicolinate synthase (297 aa).

Position 49 (threonine 49) interacts with pyruvate. Tyrosine 137 (proton donor/acceptor) is an active-site residue. The active-site Schiff-base intermediate with substrate is lysine 166. Isoleucine 208 is a binding site for pyruvate.

This sequence belongs to the DapA family. In terms of assembly, homotetramer; dimer of dimers.

The protein resides in the cytoplasm. It catalyses the reaction L-aspartate 4-semialdehyde + pyruvate = (2S,4S)-4-hydroxy-2,3,4,5-tetrahydrodipicolinate + H2O + H(+). It functions in the pathway amino-acid biosynthesis; L-lysine biosynthesis via DAP pathway; (S)-tetrahydrodipicolinate from L-aspartate: step 3/4. Its function is as follows. Catalyzes the condensation of (S)-aspartate-beta-semialdehyde [(S)-ASA] and pyruvate to 4-hydroxy-tetrahydrodipicolinate (HTPA). The polypeptide is 4-hydroxy-tetrahydrodipicolinate synthase (Phocaeicola vulgatus (strain ATCC 8482 / DSM 1447 / JCM 5826 / CCUG 4940 / NBRC 14291 / NCTC 11154) (Bacteroides vulgatus)).